Consider the following 362-residue polypeptide: Chorismate synthase (362 aa).

Arg47 contacts NADP(+). Residues 124–126, Gly286, 301–305, and Arg327 contribute to the FMN site; these read RSS and KPTAT.

This sequence belongs to the chorismate synthase family. Homotetramer. Requires FMNH2 as cofactor.

The enzyme catalyses 5-O-(1-carboxyvinyl)-3-phosphoshikimate = chorismate + phosphate. It participates in metabolic intermediate biosynthesis; chorismate biosynthesis; chorismate from D-erythrose 4-phosphate and phosphoenolpyruvate: step 7/7. In terms of biological role, catalyzes the anti-1,4-elimination of the C-3 phosphate and the C-6 proR hydrogen from 5-enolpyruvylshikimate-3-phosphate (EPSP) to yield chorismate, which is the branch point compound that serves as the starting substrate for the three terminal pathways of aromatic amino acid biosynthesis. This reaction introduces a second double bond into the aromatic ring system. The sequence is that of Chorismate synthase from Trichormus variabilis (strain ATCC 29413 / PCC 7937) (Anabaena variabilis).